The primary structure comprises 614 residues: Dolichyl-diphosphooligosaccharide--protein glycosyltransferase subunit 1A (614 aa).

The N-terminal stretch at 1 to 25 (MKQSSVVDLLLLLLAIALLATPAFS) is a signal peptide. Residues 26–432 (DLVLSKVERR…QVYYKFSNIN (407 aa)) lie on the Lumenal side of the membrane. N-linked (GlcNAc...) asparagine glycosylation is found at N94 and N299. K311 participates in a covalent cross-link: Glycyl lysine isopeptide (Lys-Gly) (interchain with G-Cter in ubiquitin). Residue N352 is glycosylated (N-linked (GlcNAc...) asparagine). A helical membrane pass occupies residues 433 to 453 (LLSEPLMLISGFFILFITCII). The Cytoplasmic segment spans residues 454-614 (YTRADISISK…EDLLEFIDEI (161 aa)).

The protein belongs to the OST1 family. As to quaternary structure, component of the oligosaccharyltransferase (OST) complex.

It is found in the endoplasmic reticulum membrane. It functions in the pathway protein modification; protein glycosylation. Subunit of the oligosaccharyl transferase (OST) complex that catalyzes the initial transfer of a defined glycan (Glc(3)Man(9)GlcNAc(2) in eukaryotes) from the lipid carrier dolichol-pyrophosphate to an asparagine residue within an Asn-X-Ser/Thr consensus motif in nascent polypeptide chains, the first step in protein N-glycosylation. N-glycosylation occurs cotranslationally and the complex associates with the Sec61 complex at the channel-forming translocon complex that mediates protein translocation across the endoplasmic reticulum (ER). All subunits are required for a maximal enzyme activity. This chain is Dolichyl-diphosphooligosaccharide--protein glycosyltransferase subunit 1A (OST1A), found in Arabidopsis thaliana (Mouse-ear cress).